The following is a 312-amino-acid chain: Methionyl-tRNA formyltransferase (312 aa).

117-120 (SLLP) provides a ligand contact to (6S)-5,6,7,8-tetrahydrofolate.

Belongs to the Fmt family.

It carries out the reaction L-methionyl-tRNA(fMet) + (6R)-10-formyltetrahydrofolate = N-formyl-L-methionyl-tRNA(fMet) + (6S)-5,6,7,8-tetrahydrofolate + H(+). In terms of biological role, attaches a formyl group to the free amino group of methionyl-tRNA(fMet). The formyl group appears to play a dual role in the initiator identity of N-formylmethionyl-tRNA by promoting its recognition by IF2 and preventing the misappropriation of this tRNA by the elongation apparatus. The sequence is that of Methionyl-tRNA formyltransferase from Bordetella parapertussis (strain 12822 / ATCC BAA-587 / NCTC 13253).